Reading from the N-terminus, the 508-residue chain is Pancreatic alpha-amylase 2a5 (508 aa).

A signal peptide spans 1–15 (MKFVLLLSLIGFCWA). Q16 bears the Pyrrolidone carboxylic acid mark. Disulfide bonds link C43–C101, C85–C130, and C156–C172. Residues N115, R170, and D179 each contribute to the Ca(2+) site. R207 serves as a coordination point for chloride. Catalysis depends on D209, which acts as the Nucleophile. H213 lines the Ca(2+) pocket. Catalysis depends on E245, which acts as the Proton donor. The chloride site is built by N310 and R349. Disulfide bonds link C390–C396 and C462–C474.

It belongs to the glycosyl hydrolase 13 family. Monomer. Requires Ca(2+) as cofactor. The cofactor is chloride.

It is found in the secreted. Its subcellular location is the extracellular space. The catalysed reaction is Endohydrolysis of (1-&gt;4)-alpha-D-glucosidic linkages in polysaccharides containing three or more (1-&gt;4)-alpha-linked D-glucose units.. The sequence is that of Pancreatic alpha-amylase 2a5 from Mus musculus (Mouse).